A 129-amino-acid polypeptide reads, in one-letter code: Small ribosomal subunit protein uS11 (129 aa).

Belongs to the universal ribosomal protein uS11 family. In terms of assembly, part of the 30S ribosomal subunit. Interacts with proteins S7 and S18. Binds to IF-3.

Functionally, located on the platform of the 30S subunit, it bridges several disparate RNA helices of the 16S rRNA. Forms part of the Shine-Dalgarno cleft in the 70S ribosome. The polypeptide is Small ribosomal subunit protein uS11 (Aromatoleum aromaticum (strain DSM 19018 / LMG 30748 / EbN1) (Azoarcus sp. (strain EbN1))).